The primary structure comprises 279 residues: Probable thymidylate synthase (279 aa).

DUMP contacts are provided by residues Arg-21 and 136–137 (RR). The active-site Nucleophile is Cys-156. DUMP is bound by residues 177–180 (RSVD), Asn-188, and 218–220 (HIY). Asp-180 serves as a coordination point for (6R)-5,10-methylene-5,6,7,8-tetrahydrofolate.

It belongs to the thymidylate synthase family.

It catalyses the reaction dUMP + (6R)-5,10-methylene-5,6,7,8-tetrahydrofolate = 7,8-dihydrofolate + dTMP. Functionally, sythesizes the thymine necessary for the viral DNA replication. In Escherichia coli (Enterobacteria phage T5), this protein is Probable thymidylate synthase.